A 224-amino-acid chain; its full sequence is Large ribosomal subunit protein uL16z (224 aa).

Belongs to the universal ribosomal protein uL16 family. Component of the small ribosomal subunit. Mature ribosomes consist of a small (40S) and a large (60S) subunit. The 40S subunit contains about 33 different proteins and 1 molecule of RNA (18S). The 60S subunit contains about 49 different proteins and 3 molecules of RNA (25S, 5.8S and 5S).

This Oryza sativa subsp. indica (Rice) protein is Large ribosomal subunit protein uL16z (SC34).